We begin with the raw amino-acid sequence, 362 residues long: Apelin receptor A (362 aa).

The Extracellular segment spans residues 1–37; sequence METEGLSPMLYEDDYYYGNETGLQPCDETDWDFSYSL. A glycan (N-linked (GlcNAc...) asparagine) is linked at N19. 2 disulfides stabilise this stretch: C26-C286 and C108-C185. A helical membrane pass occupies residues 38 to 58; sequence LPVFYMIVFVLGLSGNGVVIF. At 59–76 the chain is on the cytoplasmic side; that stretch reads TVWKSKPKRRSADTYIGN. Residues 77–97 traverse the membrane as a helical segment; it reads LALADLAFVVTLPLWATYTAL. Topologically, residues 98 to 110 are extracellular; it reads GFHWPFGSALCKL. A helical membrane pass occupies residues 111 to 131; the sequence is SSYLVLLNMFASVFCLTCLSF. The Cytoplasmic segment spans residues 132 to 151; that stretch reads DRYLAIVHSLSSAKLRSRSS. Residues 152–172 form a helical membrane-spanning segment; the sequence is IIVSLAVIWLFSGLLALPSLI. Topologically, residues 173-199 are extracellular; it reads LRDTRVEGNNTICDLDFSGVSSKENEN. N181 is a glycosylation site (N-linked (GlcNAc...) asparagine). The helical transmembrane segment at 200-220 threads the bilayer; the sequence is FWIGGLSILTTVPGFLLPLLL. Residues 221-248 are Cytoplasmic-facing; it reads MTIFYCFIGGKVTMHFQNLKKEEQKKKR. The chain crosses the membrane as a helical span at residues 249-269; that stretch reads LLKIIITLVVVFAICWLPFHI. Over 270 to 296 the chain is Extracellular; the sequence is LKTIHFLDLMGFLELSCSTQNIIVSLH. Residues 297-317 form a helical membrane-spanning segment; the sequence is PYATCLAYVNSCLNPFLYAFF. Residues 318–362 are Cytoplasmic-facing; that stretch reads DLRFRSQCFFFFGFKKVLQGHLSNTSSSLSAQTQKSEIHSLATKV.

It belongs to the G-protein coupled receptor 1 family. In terms of tissue distribution, expressed in all blood vessels including the posterior cardinal vein, intersomitic veins and the vitelline vein network. At the gastrula stage, exclusively expressed in the mesodermal layer and at the neurula stage in the lateral plate mesoderm. Larval expression is observed in the endothelium of the primary blood vessels and the forming heart.

It localises to the cell membrane. Functionally, g protein-coupled receptor for peptide hormones apelin (apln) and apelin receptor early endogenous ligand (apela), that plays a role in the regulation of normal cardiovascular function and fluid homeostasis. When acting as apelin receptor, activates both G(i) protein pathway that inhibits adenylate cyclase activity, and the beta-arrestin pathway that promotes internalization of the receptor. Also functions as mechanoreceptor that is activated by pathological stimuli in a G-protein-independent fashion to induce beta-arrestin signaling, hence eliciting cardiac hypertrophy. However, the presence of apelin ligand blunts cardiac hypertrophic induction from APLNR/APJ on response to pathological stimuli. Plays a key role in early development such as gastrulation, blood vessels formation and heart morphogenesis by acting as a receptor for apela hormone, promoting endoderm and mesendoderm cell migration and regulating the migration of cells fated to become myocardial progenitors, respectively. Promotes angioblast migration toward the embryonic midline, i.e. the position of the future vessel formation, during vasculogenesis. May promote sinus venosus (SV)-derived endothelial cells migration into the developing heart to promote coronary blood vessel development. Required for cardiovascular development, particularly for intersomitic vein angiogenesis by acting as a receptor for apln hormone. Also plays a role in various processes in adults such as regulation of blood vessel formation, blood pressure, heart contractility, and heart failure. Acts upstream of the i/o type of G-alpha proteins in the differentiation of endothelium, erythroid cells, myeloid cells and cardiomyocytes. This Xenopus laevis (African clawed frog) protein is Apelin receptor A (aplnr-a).